We begin with the raw amino-acid sequence, 385 residues long: MIATGALLRVLLLLLAFGHSTYGAECDPPCDPQYGFCEADNVCRCHVGWEGPLCDKCVTAPGCVNGVCKEPWQCICKDGWDGKFCEIDVRACTSTPCANNGTCVDLEKGQYECSCTPGFSGKDCQHKAGPCVINGSPCQHGGACVDDEGQASHASCLCPPGFSGNFCEIVAATNSCTPNPCENDGVCTDIGGDFRCRCPAGFVDKTCSRPVSNCASGPCQNGGTCLQHTQVSFECLCKPPFMGPTCAKKRGASPVQVTHLPSGYGLTYRLTPGVHELPVQQPEQHILKVSMKELNKSTPLLTEGQAICFTILGVLTSLVVLGTVAIVFLNKCETWVSNLRYNHTFRKKKNLLLQYNSGEELAVNIIFPEKIDMTTFNKEAGDEEI.

A signal peptide spans 1–23 (MIATGALLRVLLLLLAFGHSTYG). EGF-like domains are found at residues 24-55 (AECD…PLCD), 53-86 (LCDK…KFCE), 88-125 (DVRA…KDCQ), 127-168 (KAGP…NFCE), 172-208 (ATNS…KTCS), and 210-247 (PVSN…PTCA). The Extracellular segment spans residues 24–305 (AECDPPCDPQ…KSTPLLTEGQ (282 aa)). 12 cysteine pairs are disulfide-bonded: Cys-26/Cys-37, Cys-30/Cys-43, Cys-45/Cys-54, Cys-57/Cys-68, Cys-63/Cys-74, Cys-76/Cys-85, Cys-92/Cys-103, Cys-97/Cys-113, Cys-115/Cys-124, Cys-131/Cys-144, Cys-138/Cys-156, and Cys-158/Cys-167. Ser-94 is a glycosylation site (O-linked (GalNAc...) serine). N-linked (GlcNAc...) asparagine glycosylation is present at Asn-100. N-linked (GlcNAc...) asparagine; atypical; partial glycosylation occurs at Asn-165. Asn-174 carries N-linked (GlcNAc...) asparagine; atypical glycosylation. Disulfide bonds link Cys-176/Cys-187, Cys-181/Cys-196, Cys-198/Cys-207, Cys-214/Cys-225, Cys-219/Cys-235, and Cys-237/Cys-246. O-linked (GalNAc...) serine glycosylation occurs at Ser-216. Thr-224 carries an O-linked (GalNAc...) threonine glycan. Residue Thr-258 is glycosylated (O-linked (GalNAc...) threonine). An O-linked (GalNAc...) threonine; partial glycan is attached at Thr-267. Thr-271 carries O-linked (GalNAc...) threonine glycosylation. Asn-295 is a glycosylation site (N-linked (GlcNAc...) asparagine). The helical transmembrane segment at 306 to 329 (AICFTILGVLTSLVVLGTVAIVFL) threads the bilayer. Topologically, residues 330–385 (NKCETWVSNLRYNHTFRKKKNLLLQYNSGEELAVNIIFPEKIDMTTFNKEAGDEEI) are cytoplasmic.

Monomer. Interacts with SH3RF2. In terms of processing, N- and O-glycosylated. As to expression, highly expressed in fetal liver, placenta, adult adrenal gland, brain, testis and ovary and, to a lesser degree, in adult kidney, muscle, thymus and heart.

It is found in the membrane. The protein resides in the cytoplasm. Its function is as follows. May have a role in neuroendocrine differentiation. Inhibits adipocyte differentiation. This Mus musculus (Mouse) protein is Protein delta homolog 1 (Dlk1).